The primary structure comprises 348 residues: GTP 3',8-cyclase (348 aa).

Residues 24-242 (PFGRAVTYLR…EKQFTLTDID (219 aa)) enclose the Radical SAM core domain. R33 contributes to the GTP binding site. The [4Fe-4S] cluster site is built by C40 and C44. Y46 provides a ligand contact to S-adenosyl-L-methionine. C47 lines the [4Fe-4S] cluster pocket. R82 provides a ligand contact to GTP. Residue G86 coordinates S-adenosyl-L-methionine. T115 is a GTP binding site. S139 is a binding site for S-adenosyl-L-methionine. K175 is a binding site for GTP. Residue M209 coordinates S-adenosyl-L-methionine. C272 and C275 together coordinate [4Fe-4S] cluster. GTP is bound at residue 277–279 (RVR). Residue C289 coordinates [4Fe-4S] cluster.

It belongs to the radical SAM superfamily. MoaA family. As to quaternary structure, monomer and homodimer. [4Fe-4S] cluster serves as cofactor.

The catalysed reaction is GTP + AH2 + S-adenosyl-L-methionine = (8S)-3',8-cyclo-7,8-dihydroguanosine 5'-triphosphate + 5'-deoxyadenosine + L-methionine + A + H(+). It functions in the pathway cofactor biosynthesis; molybdopterin biosynthesis. Catalyzes the cyclization of GTP to (8S)-3',8-cyclo-7,8-dihydroguanosine 5'-triphosphate. This chain is GTP 3',8-cyclase, found in Rhizobium etli (strain CIAT 652).